We begin with the raw amino-acid sequence, 331 residues long: Probable cytosolic iron-sulfur protein assembly protein Ciao1 (331 aa).

7 WD repeats span residues 12-51, 57-96, 97-136, 142-181, 188-227, 246-285, and 297-331; these read GHKG…WTTK, GHKR…ATLE, GHEN…EFEC, AHSQ…SDWD, SHTS…NEAG, LHTR…KRDA, and AHEQ…KLQE.

It belongs to the WD repeat CIA1 family.

Functionally, essential component of the cytosolic iron-sulfur (Fe/S) protein assembly machinery. Required for the maturation of extramitochondrial Fe/S proteins. In Drosophila mojavensis (Fruit fly), this protein is Probable cytosolic iron-sulfur protein assembly protein Ciao1.